The following is a 602-amino-acid chain: Aspartate--tRNA(Asp/Asn) ligase (602 aa).

Position 176 (Glu176) interacts with L-aspartate. The aspartate stretch occupies residues 200–203; it reads QQFK. L-aspartate is bound by residues Arg222 and His452. 222 to 224 lines the ATP pocket; sequence RDE. Glu490 is a binding site for ATP. Residue Arg497 coordinates L-aspartate. 542 to 545 lines the ATP pocket; that stretch reads GIDR.

Belongs to the class-II aminoacyl-tRNA synthetase family. Type 1 subfamily. As to quaternary structure, homodimer.

The protein resides in the cytoplasm. The catalysed reaction is tRNA(Asx) + L-aspartate + ATP = L-aspartyl-tRNA(Asx) + AMP + diphosphate. Aspartyl-tRNA synthetase with relaxed tRNA specificity since it is able to aspartylate not only its cognate tRNA(Asp) but also tRNA(Asn). Reaction proceeds in two steps: L-aspartate is first activated by ATP to form Asp-AMP and then transferred to the acceptor end of tRNA(Asp/Asn). The polypeptide is Aspartate--tRNA(Asp/Asn) ligase (Rickettsia bellii (strain OSU 85-389)).